Consider the following 243-residue polypeptide: Triosephosphate isomerase (243 aa).

Residue Asn9–Lys11 coordinates substrate. His96 functions as the Electrophile in the catalytic mechanism. Glu165 functions as the Proton acceptor in the catalytic mechanism. Substrate contacts are provided by residues Gly171, Ser204, and Gly225–Gly226.

This sequence belongs to the triosephosphate isomerase family. As to quaternary structure, homodimer.

It localises to the cytoplasm. It carries out the reaction D-glyceraldehyde 3-phosphate = dihydroxyacetone phosphate. The protein operates within carbohydrate biosynthesis; gluconeogenesis. It functions in the pathway carbohydrate degradation; glycolysis; D-glyceraldehyde 3-phosphate from glycerone phosphate: step 1/1. Its function is as follows. Involved in the gluconeogenesis. Catalyzes stereospecifically the conversion of dihydroxyacetone phosphate (DHAP) to D-glyceraldehyde-3-phosphate (G3P). The chain is Triosephosphate isomerase from Synechococcus sp. (strain WH7803).